The chain runs to 439 residues: Ectonucleotide pyrophosphatase/phosphodiesterase family member 7 (439 aa).

A signal peptide spans 1-21 (MGHSAVLLSVALVILPACVTG). Over 22-422 (GPVQRQQQHK…RSGSPLSRQH (401 aa)) the chain is Extracellular. The Zn(2+) site is built by D38 and T74. Positions 71 to 77 (VTMTSPC) are required for enzyme activity. T74 serves as the catalytic Nucleophile. N95 serves as a coordination point for substrate. Residues N99, N120, N145, and N167 are each glycosylated (N-linked (GlcNAc...) asparagine). The Zn(2+) site is built by D198, H202, D245, and H246. The N-linked (GlcNAc...) asparagine glycan is linked to N266. Residue H352 coordinates Zn(2+). The helical transmembrane segment at 423-439 (HLVVVLMGILTGLAKVV) threads the bilayer.

Belongs to the nucleotide pyrophosphatase/phosphodiesterase family. Requires Zn(2+) as cofactor. N-glycosylated; required for activity and transport to the plasma membrane. In terms of tissue distribution, detected in small intestine (at protein level). Highly expressed in the jejunum.

It localises to the cell membrane. It carries out the reaction a sphingomyelin + H2O = phosphocholine + an N-acylsphing-4-enine + H(+). The catalysed reaction is a 1-O-alkyl-2-acetyl-sn-glycero-3-phosphocholine + H2O = a 1-O-alkyl-2-acetyl-sn-glycerol + phosphocholine + H(+). It catalyses the reaction 1-O-octadecyl-2-acetyl-sn-glycero-3-phosphocholine + H2O = 1-O-octadecyl-2-acetyl-sn-glycerol + phosphocholine + H(+). The enzyme catalyses 1-hexadecanoyl-sn-glycero-3-phosphocholine + H2O = 1-hexadecanoyl-sn-glycerol + phosphocholine + H(+). Platelet-activating factor hydrolysis is inhibited by higher amount of sphingomyelin. The hydrolysis of platelet-activating factor and sphingomyelin can be inhibited by the presence of sphingomyelin and platelet-activating factor respectively, the inhibition of platelet-activating factor hydrolysis by sphingomyelin being stronger. PAF hydrolysis is dose-dependently increased by both taurocholate (TC) and taurodeoxycholate (TDC). Hydrolase activity against PAF is inhibited by EDTA and stimulated by 0.1-0.25 mM Zn2+. In terms of biological role, choline-specific phosphodiesterase that hydrolyzes sphingomyelin (SM) releasing the ceramide and phosphocholine and therefore is involved in sphingomyelin digestion, ceramide formation, and fatty acid (FA) absorption in the gastrointestinal tract. Also has phospholipase C activity and can also cleave phosphocholine from palmitoyl lyso-phosphatidylcholine and platelet-activating factor (PAF) leading to its inactivation. Does not have nucleotide pyrophosphatase activity. May promote cholesterol absorption by affecting the levels of sphingomyelin derived from either diet or endogenous sources, in the intestinal lumen. The sequence is that of Ectonucleotide pyrophosphatase/phosphodiesterase family member 7 from Rattus norvegicus (Rat).